Consider the following 622-residue polypeptide: DNA mismatch repair protein MutL (622 aa).

Residues Arg376–Met401 are disordered.

This sequence belongs to the DNA mismatch repair MutL/HexB family.

In terms of biological role, this protein is involved in the repair of mismatches in DNA. It is required for dam-dependent methyl-directed DNA mismatch repair. May act as a 'molecular matchmaker', a protein that promotes the formation of a stable complex between two or more DNA-binding proteins in an ATP-dependent manner without itself being part of a final effector complex. This Aeromonas hydrophila subsp. hydrophila (strain ATCC 7966 / DSM 30187 / BCRC 13018 / CCUG 14551 / JCM 1027 / KCTC 2358 / NCIMB 9240 / NCTC 8049) protein is DNA mismatch repair protein MutL.